A 130-amino-acid polypeptide reads, in one-letter code: Gonadotropin subunit beta-1 (130 aa).

Residues 1 to 18 form the signal peptide; the sequence is MRMRFVVMVILLPALMMS. 5 cysteine pairs are disulfide-bonded: Cys-26/Cys-74, Cys-40/Cys-89, Cys-51/Cys-105, Cys-55/Cys-107, and Cys-110/Cys-117. Residue Asn-30 is glycosylated (N-linked (GlcNAc...) asparagine).

Belongs to the glycoprotein hormones subunit beta family. In terms of assembly, heterodimer of an alpha and a beta chain.

The protein resides in the secreted. In terms of biological role, involved in gametogenesis and steroidogenesis. The sequence is that of Gonadotropin subunit beta-1 (cgba) from Carassius auratus (Goldfish).